The following is a 396-amino-acid chain: Deoxyguanosinetriphosphate triphosphohydrolase-like protein (396 aa).

The HD domain occupies 69 to 211; sequence RLSHSLEVSQ…AALADDIAYN (143 aa).

Belongs to the dGTPase family. Type 2 subfamily.

This Parvibaculum lavamentivorans (strain DS-1 / DSM 13023 / NCIMB 13966) protein is Deoxyguanosinetriphosphate triphosphohydrolase-like protein.